The sequence spans 924 residues: Nodulation receptor kinase (924 aa).

A signal peptide spans 1 to 29 (MMELRVICIIRLVVACVLCLCIFIRSASS). Residues 361 to 382 (EVIQKMRKELLLQNQDNEALES) adopt a coiled-coil conformation. LRR repeat units lie at residues 406–428 (VITK…VTEM), 430–452 (KLQI…PPSS), 453–475 (LLIS…IISL), and 477–498 (HLNS…AKLN). Residues 520-540 (FMIGAITSGSILITLAVVILF) form a helical membrane-spanning segment. Residues 595-872 (EKYKTLIGEG…IVRELEDALI (278 aa)) enclose the Protein kinase domain. ATP contacts are provided by residues 601–609 (IGEGGFGSV) and lysine 623. Aspartate 721 (proton acceptor) is an active-site residue.

The protein belongs to the protein kinase superfamily. Ser/Thr protein kinase family. May be phosphorylated.

The protein localises to the membrane. It carries out the reaction L-seryl-[protein] + ATP = O-phospho-L-seryl-[protein] + ADP + H(+). It catalyses the reaction L-threonyl-[protein] + ATP = O-phospho-L-threonyl-[protein] + ADP + H(+). Its function is as follows. Involved in the perception of symbiotic fungi and bacteria and required for the calcium spiking. Part of the perception/transduction system leading to nodulation or mycorrhizal infection. The sequence is that of Nodulation receptor kinase (NORK) from Pisum sativum (Garden pea).